The chain runs to 141 residues: Hemoglobin subunit alpha (141 aa).

Residues Val-1–Arg-141 enclose the Globin domain. Residue Ser-3 is modified to Phosphoserine. Residues Lys-7 and Lys-11 each carry the N6-succinyllysine modification. Residue Lys-16 is modified to N6-acetyllysine; alternate. Lys-16 carries the post-translational modification N6-succinyllysine; alternate. Tyr-24 carries the post-translational modification Phosphotyrosine. The residue at position 35 (Ser-35) is a Phosphoserine. Lys-40 is modified (N6-succinyllysine). An O2-binding site is contributed by His-58. Residue His-87 participates in heme b binding. Ser-102 is modified (phosphoserine). Thr-108 is subject to Phosphothreonine. A phosphoserine mark is found at Ser-124 and Ser-131. 2 positions are modified to phosphothreonine: Thr-134 and Thr-137. Phosphoserine is present on Ser-138.

The protein belongs to the globin family. In terms of assembly, heterotetramer of two alpha chains and two beta chains. As to expression, red blood cells.

Functionally, involved in oxygen transport from the lung to the various peripheral tissues. In terms of biological role, hemopressin acts as an antagonist peptide of the cannabinoid receptor CNR1. Hemopressin-binding efficiently blocks cannabinoid receptor CNR1 and subsequent signaling. The polypeptide is Hemoglobin subunit alpha (HBA) (Pteropus poliocephalus (Grey-headed flying fox)).